The following is a 463-amino-acid chain: Argininosuccinate lyase (463 aa).

Belongs to the lyase 1 family. Argininosuccinate lyase subfamily.

It localises to the cytoplasm. The catalysed reaction is 2-(N(omega)-L-arginino)succinate = fumarate + L-arginine. It functions in the pathway amino-acid biosynthesis; L-arginine biosynthesis; L-arginine from L-ornithine and carbamoyl phosphate: step 3/3. The protein is Argininosuccinate lyase of Prochlorococcus marinus (strain NATL1A).